A 110-amino-acid polypeptide reads, in one-letter code: Phosphoribosyl-AMP cyclohydrolase (110 aa).

Aspartate 74 is a binding site for Mg(2+). Cysteine 75 is a binding site for Zn(2+). Positions 76 and 78 each coordinate Mg(2+). The Zn(2+) site is built by cysteine 91 and cysteine 98.

The protein belongs to the PRA-CH family. As to quaternary structure, homodimer. Mg(2+) serves as cofactor. The cofactor is Zn(2+).

The protein localises to the cytoplasm. It catalyses the reaction 1-(5-phospho-beta-D-ribosyl)-5'-AMP + H2O = 1-(5-phospho-beta-D-ribosyl)-5-[(5-phospho-beta-D-ribosylamino)methylideneamino]imidazole-4-carboxamide. It participates in amino-acid biosynthesis; L-histidine biosynthesis; L-histidine from 5-phospho-alpha-D-ribose 1-diphosphate: step 3/9. Functionally, catalyzes the hydrolysis of the adenine ring of phosphoribosyl-AMP. This is Phosphoribosyl-AMP cyclohydrolase from Lacticaseibacillus paracasei (strain ATCC 334 / BCRC 17002 / CCUG 31169 / CIP 107868 / KCTC 3260 / NRRL B-441) (Lactobacillus paracasei).